The primary structure comprises 359 residues: Acidic skeletal organic matrix protein (359 aa).

The signal sequence occupies residues Met1–Ser26. Disordered stretches follow at residues Phe60–Asp83 and Ser224–Glu254. Residues Asp66–Ser89 are a coiled coil.

Component of the acid-insoluble and acid-soluble organic matrix of the aragonitic skeleton (at protein level).

Its subcellular location is the secreted. The chain is Acidic skeletal organic matrix protein from Acropora millepora (Staghorn coral).